Consider the following 231-residue polypeptide: 7-cyano-7-deazaguanine synthase (231 aa).

11–21 contacts ATP; it reads LSAGLDSTVNA. The Zn(2+) site is built by Cys197, Cys205, Cys208, and Cys211.

This sequence belongs to the QueC family. It depends on Zn(2+) as a cofactor.

It catalyses the reaction 7-carboxy-7-deazaguanine + NH4(+) + ATP = 7-cyano-7-deazaguanine + ADP + phosphate + H2O + H(+). The protein operates within purine metabolism; 7-cyano-7-deazaguanine biosynthesis. Functionally, catalyzes the ATP-dependent conversion of 7-carboxy-7-deazaguanine (CDG) to 7-cyano-7-deazaguanine (preQ(0)). This is 7-cyano-7-deazaguanine synthase from Bdellovibrio bacteriovorus (strain ATCC 15356 / DSM 50701 / NCIMB 9529 / HD100).